Here is a 524-residue protein sequence, read N- to C-terminus: Bifunctional purine biosynthesis protein PurH (524 aa).

Positions Met-1–Thr-149 constitute an MGS-like domain.

Belongs to the PurH family.

It catalyses the reaction (6R)-10-formyltetrahydrofolate + 5-amino-1-(5-phospho-beta-D-ribosyl)imidazole-4-carboxamide = 5-formamido-1-(5-phospho-D-ribosyl)imidazole-4-carboxamide + (6S)-5,6,7,8-tetrahydrofolate. The enzyme catalyses IMP + H2O = 5-formamido-1-(5-phospho-D-ribosyl)imidazole-4-carboxamide. It functions in the pathway purine metabolism; IMP biosynthesis via de novo pathway; 5-formamido-1-(5-phospho-D-ribosyl)imidazole-4-carboxamide from 5-amino-1-(5-phospho-D-ribosyl)imidazole-4-carboxamide (10-formyl THF route): step 1/1. The protein operates within purine metabolism; IMP biosynthesis via de novo pathway; IMP from 5-formamido-1-(5-phospho-D-ribosyl)imidazole-4-carboxamide: step 1/1. The sequence is that of Bifunctional purine biosynthesis protein PurH from Chlorobium chlorochromatii (strain CaD3).